An 847-amino-acid chain; its full sequence is Protein translocase subunit SecA (847 aa).

Residues Gln-87, 105–109 (GEGKT), and Asp-495 contribute to the ATP site. Positions 828 to 847 (SSNSPSDARNRPIEHDDNAV) are disordered. Over residues 835–847 (ARNRPIEHDDNAV) the composition is skewed to basic and acidic residues.

The protein belongs to the SecA family. In terms of assembly, monomer and homodimer. Part of the essential Sec protein translocation apparatus which comprises SecA, SecYEG and auxiliary proteins SecDF. Other proteins may also be involved.

The protein resides in the cell membrane. Its subcellular location is the cytoplasm. The enzyme catalyses ATP + H2O + cellular proteinSide 1 = ADP + phosphate + cellular proteinSide 2.. In terms of biological role, part of the Sec protein translocase complex. Interacts with the SecYEG preprotein conducting channel. Has a central role in coupling the hydrolysis of ATP to the transfer of proteins into and across the cell membrane, serving as an ATP-driven molecular motor driving the stepwise translocation of polypeptide chains across the membrane. This is Protein translocase subunit SecA from Tropheryma whipplei (strain TW08/27) (Whipple's bacillus).